The primary structure comprises 453 residues: Serine/threonine-protein phosphatase 2A regulatory subunit B'' subunit gamma (453 aa).

EF-hand domains lie at 273-308 (PSALRVYGQYLNLDKDHNGMLSKEELSRYGTATMTN) and 341-376 (KEPAALQYIFKLLDIENKGYLNVFSLNYFFRAIQEL). Residues Asp286, Asp288, Asn290, Met292, and Glu297 each contribute to the Ca(2+) site.

As to quaternary structure, interacts with MCM3AP/GANP. Interacts with PPP5C, and the phosphatase 2A core enzyme composed of the PPP2CA catalytic subunit and the constant regulatory subunit PPP2R1A. Finds in a complex with ABCB1, TFPI2 and PPP2R3C; leading to the dephosphorylation of ABCB1. As to expression, ubiquitously expressed in brain and other tissues.

Its subcellular location is the nucleus. It is found in the cytoplasm. In terms of biological role, may regulate MCM3AP phosphorylation through phosphatase recruitment. May act as a negative regulator of ABCB1 expression and function through the dephosphorylation of ABCB1 by TFPI2/PPP2R3C complex. May play a role in the activation-induced cell death of B-cells. This Homo sapiens (Human) protein is Serine/threonine-protein phosphatase 2A regulatory subunit B'' subunit gamma (PPP2R3C).